Reading from the N-terminus, the 387-residue chain is Phosphoglycerate kinase (387 aa).

Residues 21–23, Arg36, 59–62, Arg113, and Arg146 contribute to the substrate site; these read DLN and HLGR. ATP-binding positions include Lys197, Glu314, and 340–343; that span reads GGDT.

Belongs to the phosphoglycerate kinase family. As to quaternary structure, monomer.

It localises to the cytoplasm. The catalysed reaction is (2R)-3-phosphoglycerate + ATP = (2R)-3-phospho-glyceroyl phosphate + ADP. It functions in the pathway carbohydrate degradation; glycolysis; pyruvate from D-glyceraldehyde 3-phosphate: step 2/5. The chain is Phosphoglycerate kinase from Photorhabdus luminescens (Xenorhabdus luminescens).